The primary structure comprises 293 residues: 3-methyl-2-oxobutanoate hydroxymethyltransferase (293 aa).

A disordered region spans residues 1 to 26 (MTQAPVTAGTPYGTIPPASPLPQRRP). Mg(2+) is bound by residues aspartate 68 and aspartate 111. 3-methyl-2-oxobutanoate contacts are provided by residues 68–69 (DS), aspartate 111, and lysine 140. Glutamate 142 is a Mg(2+) binding site. Residue glutamate 209 is the Proton acceptor of the active site.

Belongs to the PanB family. Homodecamer; pentamer of dimers. Mg(2+) is required as a cofactor.

The protein localises to the cytoplasm. The enzyme catalyses 3-methyl-2-oxobutanoate + (6R)-5,10-methylene-5,6,7,8-tetrahydrofolate + H2O = 2-dehydropantoate + (6S)-5,6,7,8-tetrahydrofolate. It participates in cofactor biosynthesis; (R)-pantothenate biosynthesis; (R)-pantoate from 3-methyl-2-oxobutanoate: step 1/2. Its function is as follows. Catalyzes the reversible reaction in which hydroxymethyl group from 5,10-methylenetetrahydrofolate is transferred onto alpha-ketoisovalerate to form ketopantoate. In Delftia acidovorans (strain DSM 14801 / SPH-1), this protein is 3-methyl-2-oxobutanoate hydroxymethyltransferase.